Here is a 423-residue protein sequence, read N- to C-terminus: Protein phosphatase 2C 77 (423 aa).

Residues 74–95 (GDEINGSDEFDPRSMNQSEKKV) are disordered. One can recognise a PPM-type phosphatase domain in the interval 112 to 411 (LYGVTSICGR…DNISVVVVDL (300 aa)). Residues Asp-165, Asp-251, and Ser-252 each coordinate Mg(2+). A disulfide bridge connects residues Cys-257 and Cys-331. Mg(2+) is bound by residues Asp-337 and Asp-402.

This sequence belongs to the PP2C family. As to quaternary structure, interacts with SPK1, CIPK15/PKS3, GPX3, SCAR1, SCAR2, SCAR3 and SCARL. Also interacts with CIPK24/SOS2. Binds to the fibrillin precursor protein. Interacts with ABA-bounded PYR1, PYL1, PYL2, PYL3, PYL4, PYL5, PYL6, PYL8 and PYL9, and with free PYL2, PYL3 and PYL4. Interacts with and represses GHR1, and, to a lesser extent, SRK2E/OST1. Mg(2+) serves as cofactor. Mn(2+) is required as a cofactor.

The catalysed reaction is O-phospho-L-seryl-[protein] + H2O = L-seryl-[protein] + phosphate. The enzyme catalyses O-phospho-L-threonyl-[protein] + H2O = L-threonyl-[protein] + phosphate. Its activity is regulated as follows. Phosphatase activity repressed by oxidized ATGPX3, free fatty acids (e.g. arachidonic acid (20:4) and Linolenic acid (18:3)) and by H(2)O(2). Repressed by PYR/PYL/RCAR ABA receptors in an ABA-dependent manner. Functionally, repressor of the abscisic acid (ABA) signaling pathway that regulates numerous ABA responses, such as stomatal closure, osmotic water permeability of the plasma membrane (Pos), high light stress, response to glucose, seed germination and inhibition of vegetative growth. During the stomatal closure regulation, modulates the inward calcium-channel permeability as well as H(2)O(2) and oxidative burst in response to ABA and dehydration. Represses GHR1 and, to some extent, SRK2E/OST1, kinases involved in the regulation of SLAC1-dependent stomatal closure. Controls negatively fibrillin that is involved in mediating ABA-induced photoprotection. May be implicated in ABA content regulation. Involved in acquired thermotolerance of root growth and seedling survival. Required for the Erwinia amylovora harpin-induced (HrpN) drought tolerance. Involved in the hydrotropic response. The chain is Protein phosphatase 2C 77 from Arabidopsis thaliana (Mouse-ear cress).